A 103-amino-acid chain; its full sequence is Large ribosomal subunit protein uL23 (103 aa).

The protein belongs to the universal ribosomal protein uL23 family. As to quaternary structure, part of the 50S ribosomal subunit. Contacts protein L29, and trigger factor when it is bound to the ribosome.

Functionally, one of the early assembly proteins it binds 23S rRNA. One of the proteins that surrounds the polypeptide exit tunnel on the outside of the ribosome. Forms the main docking site for trigger factor binding to the ribosome. The chain is Large ribosomal subunit protein uL23 from Pelodictyon phaeoclathratiforme (strain DSM 5477 / BU-1).